The primary structure comprises 231 residues: Orotidine 5'-phosphate decarboxylase (231 aa).

Residues Asp11, Lys33, 60–69, Thr117, Arg179, Gln187, Gly207, and Arg208 contribute to the substrate site; that span reads DLKLHDIPNT. Residue Lys62 is the Proton donor of the active site.

This sequence belongs to the OMP decarboxylase family. Type 1 subfamily. In terms of assembly, homodimer.

It carries out the reaction orotidine 5'-phosphate + H(+) = UMP + CO2. The protein operates within pyrimidine metabolism; UMP biosynthesis via de novo pathway; UMP from orotate: step 2/2. Its function is as follows. Catalyzes the decarboxylation of orotidine 5'-monophosphate (OMP) to uridine 5'-monophosphate (UMP). The polypeptide is Orotidine 5'-phosphate decarboxylase (Ehrlichia chaffeensis (strain ATCC CRL-10679 / Arkansas)).